A 136-amino-acid polypeptide reads, in one-letter code: Protein PsiE (136 aa).

The next 4 helical transmembrane spans lie at 15-35 (ILQN…VVFL), 55-75 (YELV…ALIV), 83-103 (HFPL…LIIV), and 108-128 (PMDV…LWLC).

Belongs to the PsiE family.

Its subcellular location is the cell inner membrane. This Salmonella agona (strain SL483) protein is Protein PsiE.